A 182-amino-acid chain; its full sequence is MASIMMNKSVVLSKECAKPLATPKVTLNKRGFATTIATKNREMMVWQPFNNKMFETFSFLPPLTDEQISKQVDYILTNSWTPCLEFAASDQAYAGNENCIRMGPVASTYQDNRYWTMWKLPMFGCTDGSQVLSEIQACTKAFPDAYIRLVCFDANRQVQISGFLVHRPPSATDYRLPADRQV.

The N-terminal 42 residues, 1-42 (MASIMMNKSVVLSKECAKPLATPKVTLNKRGFATTIATKNRE), are a transit peptide targeting the chloroplast.

This sequence belongs to the RuBisCO small chain family. Heterohexadecamer of 8 large and 8 small subunits.

Its subcellular location is the plastid. The protein localises to the chloroplast. Its function is as follows. RuBisCO catalyzes two reactions: the carboxylation of D-ribulose 1,5-bisphosphate, the primary event in carbon dioxide fixation, as well as the oxidative fragmentation of the pentose substrate. Both reactions occur simultaneously and in competition at the same active site. Although the small subunit is not catalytic it is essential for maximal activity. This chain is Ribulose bisphosphate carboxylase small subunit, chloroplastic 1, found in Acetabularia acetabulum (Mermaid's wine glass).